The sequence spans 181 residues: Sodium/potassium-transporting ATPase subunit beta-1-interacting protein 3 (181 aa).

The next 4 membrane-spanning stretches (helical) occupy residues 5–22, 35–55, 62–82, and 151–171; these read TGRC…LVAL, APIL…FGTI, IVAY…IICF, and AVQI…ISVI.

It belongs to the NKAIN family. Interacts with atp1b1 C-terminus.

It is found in the cell membrane. In Xenopus tropicalis (Western clawed frog), this protein is Sodium/potassium-transporting ATPase subunit beta-1-interacting protein 3 (nkain3).